The chain runs to 336 residues: UPF0284 protein Pcal_1534 (336 aa).

The protein belongs to the UPF0284 family.

The sequence is that of UPF0284 protein Pcal_1534 from Pyrobaculum calidifontis (strain DSM 21063 / JCM 11548 / VA1).